Consider the following 1219-residue polypeptide: MDKEERKTINKGQEDEMEIHGYNLCRWKLAMVFVGVICTGGFLLLLLYWLPEWRVKATCVRAAVKDCEVVLLRTTDEFRVWFCAKIHFLPVENQPNLNAKCLVNEVSNGHAVHLTEENRCEMNKYSQSQSQQMRYFTHHSIRYFWNDAIHNFDFLKGLDEGVSCASLYEKHSAGLTQGMHAYRKLIYGVNEIAVKVPSVFKLLIKEVLNPFYIFQLFSVILWSVDEYYYYALAIVIMSVVSIISSLYSIRKQYVMLHDMVATHSTVRVSVCRENEEIEEIFSTDLVPGDVMIIPLNGTVMPCDAVLINGTCIVNESMLTGESVPVTKTNLPNPSVDVKGMGEEQYSPETHKRHTLFCGTTVIQTRFYTGELVKAIVVRTGFSTSKGQLVRSILYPKPTDFKLYRDAYLFLLCLVVVAGIGFIYTIINSILNEKEVQEIIIKSLDIITITVPPALPAAMTAGIVYAQRRLKKVGIFCISPQRINICGQLNLVCFDKTGTLTEDGLDLWGIQRVENTRFLLPEDNVCSEMLVKSQFVACMATCHSLTKIEGVLSGDPLDLKMFEAIGWILEEATEEETALHNRIMPTVVRPSKQLLPEPTTAGNQEMELFELPAIYEIGIVRQFPFSSALQRMSVVARTLGEKRMDAYMKGAPEVVASLCKPETVPVDFEKVLEDYTKQGFRVIALAHRKLESKLTWHKVQHISRDAIENNMDFMGLIIMQNKLKQETPAVLEDLHKANIRTVMVTGDNMLTAVSVARDCGMILPQDKVIIAEALPPKDGKVAKINWHYTDSLSQCSESSAIDSEAIPIKLAHDSLEDLEVTRYHFAMNGKSFSVILEHFQDLVPKLMLHGTVFARMAPDQKTQLVEALQNVDYFVGMCGDGANDCGALKRAHGGISLSELEASVASPFTSKTPSISCVPNLIREGRAALMTSFCVFKFMALYSIIQYFSVTLLYSILSNLGDFQFLFIDLAIILVVVFTMSLNPAWKELVAQRPPSGLISGALLFSVLSQIVISVGFQSLGFFWVKQYKVCDPNSDVCNTTRSACWNSSHLYNGTELDSCKIQNYENTTVFFISSFQYLTVAVAFSKGKPFRQPCYKNYFFVISVIILYVFILFIMLHPVASVDQVLEIMCVPYQWRIYMLIIVLINAFVSITVEESVDRWGKCCLSWALSCRKKTPKAKYMYLAQELRFDPEWPPKPQTTTEAKAVVKENGSCQIITIA.

The Cytoplasmic portion of the chain corresponds to 1–28 (MDKEERKTINKGQEDEMEIHGYNLCRWK). Residues 29–49 (LAMVFVGVICTGGFLLLLLYW) lie within the membrane without spanning it. At 50–201 (LPEWRVKATC…IAVKVPSVFK (152 aa)) the chain is on the cytoplasmic side. The helical transmembrane segment at 202 to 222 (LLIKEVLNPFYIFQLFSVILW) threads the bilayer. Over 223–228 (SVDEYY) the chain is Lumenal. Residues 229–249 (YYALAIVIMSVVSIISSLYSI) traverse the membrane as a helical segment. Topologically, residues 250-405 (RKQYVMLHDM…KPTDFKLYRD (156 aa)) are cytoplasmic. Residues 406-426 (AYLFLLCLVVVAGIGFIYTII) form a helical membrane-spanning segment. Topologically, residues 427–444 (NSILNEKEVQEIIIKSLD) are lumenal. Residues 445–465 (IITITVPPALPAAMTAGIVYA) traverse the membrane as a helical segment. Over 466 to 936 (QRRLKKVGIF…ALMTSFCVFK (471 aa)) the chain is Cytoplasmic. Asp-494 functions as the 4-aspartylphosphate intermediate in the catalytic mechanism. Residues Asp-494 and Thr-496 each coordinate Mg(2+). ATP contacts are provided by residues 494–496 (DKT), Phe-624, Arg-680, and Asp-746. Ser-813 is subject to Phosphoserine. Residues Asp-879 and Asp-883 each coordinate Mg(2+). Position 879–883 (879–883 (DGAND)) interacts with ATP. Residues 937 to 957 (FMALYSIIQYFSVTLLYSILS) traverse the membrane as a helical segment. Asn-958 is a topological domain (lumenal). A helical membrane pass occupies residues 959 to 979 (LGDFQFLFIDLAIILVVVFTM). Over 980 to 995 (SLNPAWKELVAQRPPS) the chain is Cytoplasmic. Residues 996-1016 (GLISGALLFSVLSQIVISVGF) form a helical membrane-spanning segment. Residues 1017 to 1066 (QSLGFFWVKQYKVCDPNSDVCNTTRSACWNSSHLYNGTELDSCKIQNYEN) are Lumenal-facing. A helical transmembrane segment spans residues 1067–1087 (TTVFFISSFQYLTVAVAFSKG). Topologically, residues 1088–1098 (KPFRQPCYKNY) are cytoplasmic. Residues 1099–1119 (FFVISVIILYVFILFIMLHPV) form a helical membrane-spanning segment. The Lumenal portion of the chain corresponds to 1120 to 1136 (ASVDQVLEIMCVPYQWR). The helical transmembrane segment at 1137-1157 (IYMLIIVLINAFVSITVEESV) threads the bilayer. Over 1158–1219 (DRWGKCCLSW…NGSCQIITIA (62 aa)) the chain is Cytoplasmic.

The protein belongs to the cation transport ATPase (P-type) (TC 3.A.3) family. Type V subfamily. As to expression, expression is greatest in liver, followed by kidney, colon, stomach, brain and small intestine. Isoform 1 is highly expressed in the kidney while isoform 2 is highly expressed in the brain.

The protein localises to the recycling endosome membrane. It is found in the early endosome membrane. It localises to the late endosome membrane. The catalysed reaction is putrescine(out) + ATP + H2O = putrescine(in) + ADP + phosphate + H(+). Functionally, ATP-driven pump involved in endocytosis-dependent polyamine transport. Uses ATP as an energy source to transfer polyamine precursor putrescine from the endosomal compartment to the cytosol. This Mus musculus (Mouse) protein is Polyamine-transporting ATPase 13A3.